Consider the following 255-residue polypeptide: tRNA pseudouridine synthase B (255 aa).

D52 serves as the catalytic Nucleophile. Substrate-binding residues include Y80, Y183, and L204.

It belongs to the pseudouridine synthase TruB family. Type 1 subfamily.

It carries out the reaction uridine(55) in tRNA = pseudouridine(55) in tRNA. Functionally, responsible for synthesis of pseudouridine from uracil-55 in the psi GC loop of transfer RNAs. The protein is tRNA pseudouridine synthase B of Blochmanniella floridana.